Consider the following 562-residue polypeptide: Dihydroxy-acid dehydratase 2 (562 aa).

Position 50 (Cys50) interacts with [2Fe-2S] cluster. Residue Asp82 participates in Mg(2+) binding. [2Fe-2S] cluster is bound at residue Cys123. Asp124, Lys125, and Glu447 together coordinate Mg(2+). N6-carboxylysine is present on Lys125. Residue Ser473 is the Proton acceptor of the active site.

The protein belongs to the IlvD/Edd family. Homodimer. It depends on [2Fe-2S] cluster as a cofactor. The cofactor is Mg(2+).

It catalyses the reaction (2R)-2,3-dihydroxy-3-methylbutanoate = 3-methyl-2-oxobutanoate + H2O. The catalysed reaction is (2R,3R)-2,3-dihydroxy-3-methylpentanoate = (S)-3-methyl-2-oxopentanoate + H2O. It participates in amino-acid biosynthesis; L-isoleucine biosynthesis; L-isoleucine from 2-oxobutanoate: step 3/4. The protein operates within amino-acid biosynthesis; L-valine biosynthesis; L-valine from pyruvate: step 3/4. Functionally, functions in the biosynthesis of branched-chain amino acids. Catalyzes the dehydration of (2R,3R)-2,3-dihydroxy-3-methylpentanoate (2,3-dihydroxy-3-methylvalerate) into 2-oxo-3-methylpentanoate (2-oxo-3-methylvalerate) and of (2R)-2,3-dihydroxy-3-methylbutanoate (2,3-dihydroxyisovalerate) into 2-oxo-3-methylbutanoate (2-oxoisovalerate), the penultimate precursor to L-isoleucine and L-valine, respectively. The polypeptide is Dihydroxy-acid dehydratase 2 (Bordetella pertussis (strain Tohama I / ATCC BAA-589 / NCTC 13251)).